The chain runs to 198 residues: Putative peptidyl-prolyl cis-trans isomerase (198 aa).

The PPIase cyclophilin-type domain maps to 14–195 (NEIKVAMHTN…HDVVIESIDV (182 aa)).

The protein belongs to the cyclophilin-type PPIase family.

The enzyme catalyses [protein]-peptidylproline (omega=180) = [protein]-peptidylproline (omega=0). Its function is as follows. PPIases accelerate the folding of proteins. It catalyzes the cis-trans isomerization of proline imidic peptide bonds in oligopeptides. This Staphylococcus haemolyticus (strain JCSC1435) protein is Putative peptidyl-prolyl cis-trans isomerase.